A 303-amino-acid chain; its full sequence is Cysteine synthase B (303 aa).

An N6-(pyridoxal phosphate)lysine modification is found at lysine 41. Pyridoxal 5'-phosphate is bound by residues asparagine 71, 174–178, and serine 255; that span reads GTTGT.

Belongs to the cysteine synthase/cystathionine beta-synthase family. As to quaternary structure, homodimer. Pyridoxal 5'-phosphate serves as cofactor.

It catalyses the reaction O-acetyl-L-serine + hydrogen sulfide = L-cysteine + acetate. It participates in amino-acid biosynthesis; L-cysteine biosynthesis; L-cysteine from L-serine: step 2/2. In terms of biological role, two cysteine synthase enzymes are found. Both catalyze the same reaction. Cysteine synthase B can also use thiosulfate in place of sulfide to give cysteine thiosulfonate as a product. This chain is Cysteine synthase B (cysM), found in Escherichia coli (strain K12).